Consider the following 308-residue polypeptide: Transaldolase (308 aa).

The active-site Schiff-base intermediate with substrate is the Lys125.

The protein belongs to the transaldolase family. Type 1 subfamily. In terms of assembly, homodimer.

It localises to the cytoplasm. It carries out the reaction D-sedoheptulose 7-phosphate + D-glyceraldehyde 3-phosphate = D-erythrose 4-phosphate + beta-D-fructose 6-phosphate. The protein operates within carbohydrate degradation; pentose phosphate pathway; D-glyceraldehyde 3-phosphate and beta-D-fructose 6-phosphate from D-ribose 5-phosphate and D-xylulose 5-phosphate (non-oxidative stage): step 2/3. Functionally, transaldolase is important for the balance of metabolites in the pentose-phosphate pathway. This chain is Transaldolase, found in Pseudomonas putida (strain GB-1).